A 158-amino-acid chain; its full sequence is 6,7-dimethyl-8-ribityllumazine synthase (158 aa).

5-amino-6-(D-ribitylamino)uracil is bound by residues F22, 57-59 (AVE), and 81-83 (AVI). 86-87 (GT) contacts (2S)-2-hydroxy-3-oxobutyl phosphate. Residue H89 is the Proton donor of the active site. F114 serves as a coordination point for 5-amino-6-(D-ribitylamino)uracil. Position 128 (R128) interacts with (2S)-2-hydroxy-3-oxobutyl phosphate.

Belongs to the DMRL synthase family. In terms of assembly, forms an icosahedral capsid composed of 60 subunits, arranged as a dodecamer of pentamers.

The enzyme catalyses (2S)-2-hydroxy-3-oxobutyl phosphate + 5-amino-6-(D-ribitylamino)uracil = 6,7-dimethyl-8-(1-D-ribityl)lumazine + phosphate + 2 H2O + H(+). The protein operates within cofactor biosynthesis; riboflavin biosynthesis; riboflavin from 2-hydroxy-3-oxobutyl phosphate and 5-amino-6-(D-ribitylamino)uracil: step 1/2. Its function is as follows. Catalyzes the formation of 6,7-dimethyl-8-ribityllumazine by condensation of 5-amino-6-(D-ribitylamino)uracil with 3,4-dihydroxy-2-butanone 4-phosphate. This is the penultimate step in the biosynthesis of riboflavin. This Shewanella frigidimarina (strain NCIMB 400) protein is 6,7-dimethyl-8-ribityllumazine synthase.